We begin with the raw amino-acid sequence, 375 residues long: Ribosomal RNA large subunit methyltransferase G (375 aa).

The protein belongs to the methyltransferase superfamily. RlmG family.

The protein resides in the cytoplasm. It carries out the reaction guanosine(1835) in 23S rRNA + S-adenosyl-L-methionine = N(2)-methylguanosine(1835) in 23S rRNA + S-adenosyl-L-homocysteine + H(+). Its function is as follows. Specifically methylates the guanine in position 1835 (m2G1835) of 23S rRNA. In Erwinia tasmaniensis (strain DSM 17950 / CFBP 7177 / CIP 109463 / NCPPB 4357 / Et1/99), this protein is Ribosomal RNA large subunit methyltransferase G.